A 193-amino-acid polypeptide reads, in one-letter code: dCTP deaminase (193 aa).

DCTP is bound by residues 110–115 (RSSLAR), Asp128, 136–138 (VLE), Tyr171, Lys178, and Gln182. Residue Glu138 is the Proton donor/acceptor of the active site. The tract at residues 168-193 (DRPYNRRQDAKYKNQQGAVSSRIDED) is disordered. Positions 170–179 (PYNRRQDAKY) are enriched in basic and acidic residues.

Belongs to the dCTP deaminase family. Homotrimer.

The catalysed reaction is dCTP + H2O + H(+) = dUTP + NH4(+). It functions in the pathway pyrimidine metabolism; dUMP biosynthesis; dUMP from dCTP (dUTP route): step 1/2. Functionally, catalyzes the deamination of dCTP to dUTP. The sequence is that of dCTP deaminase from Photorhabdus laumondii subsp. laumondii (strain DSM 15139 / CIP 105565 / TT01) (Photorhabdus luminescens subsp. laumondii).